A 206-amino-acid polypeptide reads, in one-letter code: 3-isopropylmalate dehydratase small subunit (206 aa).

Belongs to the LeuD family. LeuD type 1 subfamily. As to quaternary structure, heterodimer of LeuC and LeuD.

It catalyses the reaction (2R,3S)-3-isopropylmalate = (2S)-2-isopropylmalate. Its pathway is amino-acid biosynthesis; L-leucine biosynthesis; L-leucine from 3-methyl-2-oxobutanoate: step 2/4. Functionally, catalyzes the isomerization between 2-isopropylmalate and 3-isopropylmalate, via the formation of 2-isopropylmaleate. The protein is 3-isopropylmalate dehydratase small subunit of Acidobacterium capsulatum (strain ATCC 51196 / DSM 11244 / BCRC 80197 / JCM 7670 / NBRC 15755 / NCIMB 13165 / 161).